The sequence spans 467 residues: Methylenetetrahydrofolate--tRNA-(uracil-5-)-methyltransferase TrmFO (467 aa).

10–15 provides a ligand contact to FAD; that stretch reads GAGLAG.

This sequence belongs to the MnmG family. TrmFO subfamily. FAD is required as a cofactor.

It localises to the cytoplasm. It carries out the reaction uridine(54) in tRNA + (6R)-5,10-methylene-5,6,7,8-tetrahydrofolate + NADH + H(+) = 5-methyluridine(54) in tRNA + (6S)-5,6,7,8-tetrahydrofolate + NAD(+). The catalysed reaction is uridine(54) in tRNA + (6R)-5,10-methylene-5,6,7,8-tetrahydrofolate + NADPH + H(+) = 5-methyluridine(54) in tRNA + (6S)-5,6,7,8-tetrahydrofolate + NADP(+). Functionally, catalyzes the folate-dependent formation of 5-methyl-uridine at position 54 (M-5-U54) in all tRNAs. In Prochlorococcus marinus (strain MIT 9515), this protein is Methylenetetrahydrofolate--tRNA-(uracil-5-)-methyltransferase TrmFO.